The following is a 36-amino-acid chain: Pancreatic polypeptide (36 aa).

The residue at position 36 (Tyr-36) is a Tyrosine amide.

The protein belongs to the NPY family.

The protein resides in the secreted. Functionally, hormone secreted by pancreatic cells that acts as a regulator of pancreatic and gastrointestinal functions probably by signaling through the G protein-coupled receptor NPY4R2. The sequence is that of Pancreatic polypeptide (PPY) from Macaca mulatta (Rhesus macaque).